Consider the following 659-residue polypeptide: Protein kinase byr2 (659 aa).

Positions tyrosine 4–phenylalanine 67 constitute an SAM domain. The span at proline 180–threonine 190 shows a compositional bias: low complexity. Disordered regions lie at residues proline 180–proline 209 and serine 354–threonine 387. Positions serine 354–glutamate 365 are enriched in polar residues. The segment covering proline 367–threonine 380 has biased composition (low complexity). The Protein kinase domain maps to tryptophan 394–valine 658. ATP contacts are provided by residues isoleucine 400–valine 408 and lysine 423. Aspartate 522 serves as the catalytic Proton acceptor.

The protein belongs to the protein kinase superfamily. STE Ser/Thr protein kinase family. MAP kinase kinase kinase subfamily. In terms of assembly, interacts with rad24 and rad25; these prevent its translocation to the cell membrane during nitrogen starvation.

It localises to the cytoplasm. It is found in the cell membrane. The enzyme catalyses L-seryl-[protein] + ATP = O-phospho-L-seryl-[protein] + ADP + H(+). It carries out the reaction L-threonyl-[protein] + ATP = O-phospho-L-threonyl-[protein] + ADP + H(+). Functionally, serine/threonine protein kinase involved in conjugation and sporulation. It is thought that it phosphorylates the byr1 protein kinase which itself phosphorylate the spk1 kinase. The sequence is that of Protein kinase byr2 from Schizosaccharomyces pombe (strain 972 / ATCC 24843) (Fission yeast).